Here is a 349-residue protein sequence, read N- to C-terminus: MPPVSRILSYAPRVAIRPSSQLARPARAFAVGTVRYYSAEQPEEPLIRVTDLPAPNSGHIRVLELNRPKARNAISRALLASLREEVHSIARQYDAQTGEEIPTPSWNKRFGGIAGDSEKGPTRALVLASAVESSFCAGADLKERRGFTQEETNEFLANLRSTFAALDALPIPTISAISSRALGGGLELALCTHFRVLTSNAIVSLPETRLGIIPGAGGTHRLPRLIGLGRARDMIVTGRAVSGAEAYFLGLADRLVEVLPPDEQEAADTTDKDAALLSAAREAALTEAVRLASQICEGGPIGIRAALQAVQAPSQETENKMYERVIGTEDRNEALKAFAEKRKPVFKGR.

The transit peptide at 1–37 directs the protein to the mitochondrion; sequence MPPVSRILSYAPRVAIRPSSQLARPARAFAVGTVRYY.

Belongs to the enoyl-CoA hydratase/isomerase family. As to quaternary structure, homohexamer.

The protein localises to the mitochondrion. It catalyses the reaction (3S)-3-hydroxy-3-methylglutaryl-CoA = 3-methyl-(2E)-glutaconyl-CoA + H2O. The protein operates within amino-acid degradation; L-leucine degradation; (S)-3-hydroxy-3-methylglutaryl-CoA from 3-isovaleryl-CoA: step 3/3. Its function is as follows. 3-methylglutaconyl-CoA hydratase that catalyzes the fifth step in the leucine degradation pathway, the reversible hydration of 3-methylglutaconyl-CoA (3-MG-CoA) to 3-hydroxy-3-methylglutaryl-CoA (HMG-CoA). Involved in vegetative growth, conidiation and in the stress response. Controls mitochondrial morphology and mitophagy, which are critical for the infectious growth of the pathogen. The sequence is that of Methylglutaconyl-CoA hydratase 1, mitochondrial from Pyricularia oryzae (strain 70-15 / ATCC MYA-4617 / FGSC 8958) (Rice blast fungus).